The sequence spans 579 residues: Putative truncated flagellar export/assembly protein LfhA (579 aa).

A run of 3 helical transmembrane segments spans residues Ala86–Phe106, Ile124–Ile144, and Phe177–Leu197.

Belongs to the FHIPEP (flagella/HR/invasion proteins export pore) family.

It is found in the cell inner membrane. The polypeptide is Putative truncated flagellar export/assembly protein LfhA (Escherichia coli (strain K12)).